A 358-amino-acid polypeptide reads, in one-letter code: DNA methyltransferase CcrM (358 aa).

The interval 1–260 is methyltransferase; that stretch reads MKFGPETIIH…AKVVPIAPED (260 aa). DNA-binding regions (target strand DNA) lie at residues 31–34 and 39–45; these read DPPY and GGDLLRP. DNA-binding regions (non-target strand DNA) lie at residues 93–94 and 109–110; these read YH and WI. His-94 serves as a coordination point for dsDNA. The target strand DNA DNA-binding region spans 122–132; that stretch reads MPNFKGTRFAN. Residues 153-157 constitute a DNA-binding region (non-target strand DNA); it reads YDALK. Positions 164 and 179 each coordinate dsDNA. The segment at residues 187–193 is a DNA-binding region (target strand DNA); that stretch reads KAHPTQK. One can recognise an RAMA domain in the interval 259 to 355; that stretch reads EDLDVMGSKR…IDVLRAQVRA (97 aa). The segment at 261 to 270 is linker; it reads LDVMGSKRAE. 2 residues coordinate dsDNA: Lys-267 and Arg-272. A non-specific DNA-binding region spans residues 272–358; sequence RVPFGTIVEA…LRAQVRAGMN (87 aa). 2 DNA-binding regions (non-target strand DNA) span residues 315–317 and 330–332; these read SIH and NGW. Residue Arg-350 coordinates dsDNA.

This sequence belongs to the N(4)/N(6)-methyltransferase family. In terms of assembly, homodimer. Post-translationally, rapidly degraded by Lon protease prior to cell division.

The enzyme catalyses a 2'-deoxyadenosine in DNA + S-adenosyl-L-methionine = an N(6)-methyl-2'-deoxyadenosine in DNA + S-adenosyl-L-homocysteine + H(+). Functionally, a beta subtype methylase that recognizes the double-stranded sequence 5'-GANTC-3' and methylates non-modifed A-2 on the hemimethylated, post-replicative DNA. Opens a bubble in the DNA at the recognition site, allowing precise recognition of the sequence and ensuring enzyme specificity. Functions only in the predivisional cell. Responsible for 5'-GANTC-3' methylation in the cell; methylation of hemimethylated sites generated after replication fork passage occurs late in the predivisional cell, near completion of chromosome replication but prior to cell division. Contributes to the accurate cell-cycle control of DNA replication and cellular morphology. This is DNA methyltransferase CcrM (ccrMIM) from Caulobacter vibrioides (strain ATCC 19089 / CIP 103742 / CB 15) (Caulobacter crescentus).